An 84-amino-acid polypeptide reads, in one-letter code: Beta-mammal toxin Cn2 (84 aa).

The N-terminal stretch at 1–16 (LLIITACLALIGTVWA) is a signal peptide. The LCN-type CS-alpha/beta domain maps to 17–82 (KEGYLVDKNT…VWPLPNKRCS (66 aa)). Cystine bridges form between C28–C81, C32–C57, C41–C62, and C45–C64. A Serine amide modification is found at S82.

Belongs to the long (4 C-C) scorpion toxin superfamily. Sodium channel inhibitor family. Beta subfamily. In terms of tissue distribution, expressed by the venom gland.

Its subcellular location is the secreted. In terms of biological role, mammal beta-toxins bind voltage-independently at site-4 of sodium channels (Nav) and shift the activation voltage to more negative potentials. This toxin is active against mammals. The chain is Beta-mammal toxin Cn2 from Centruroides noxius (Mexican scorpion).